The chain runs to 71 residues: Long neurotoxin 5 (71 aa).

5 disulfide bridges follow: Cys-3-Cys-20, Cys-14-Cys-41, Cys-26-Cys-30, Cys-45-Cys-56, and Cys-57-Cys-62.

This sequence belongs to the three-finger toxin family. Long-chain subfamily. Type II alpha-neurotoxin sub-subfamily. In terms of tissue distribution, expressed by the venom gland.

The protein localises to the secreted. Binds with high affinity to muscular (alpha-1/CHRNA1) and neuronal (alpha-7/CHRNA7) nicotinic acetylcholine receptor (nAChR) and inhibits acetylcholine from binding to the receptor, thereby impairing neuromuscular and neuronal transmission. The chain is Long neurotoxin 5 from Naja naja (Indian cobra).